We begin with the raw amino-acid sequence, 95 residues long: uncharacterized protein (95 aa).

Residues 1-73 form a disordered region; sequence MAHFKDDLQT…AQQPSMRTEL (73 aa). Polar residues-rich tracts occupy residues 42 to 52 and 62 to 73; these read SNHSPSVQESP and GSAQQPSMRTEL.

This is an uncharacterized protein from Homo sapiens (Human).